A 904-amino-acid chain; its full sequence is Envelope glycoprotein B (904 aa).

An N-terminal signal peptide occupies residues 1–30 (MHQGAPSWGRRWFVVWALLGLTLGVLVASA). At 31 to 774 (APTSPGTPGV…SGVSSFMSNP (744 aa)) the chain is on the virion surface side. The segment covering 32 to 52 (PTSPGTPGVAAATQAANGGPA) has biased composition (low complexity). Residues 32 to 88 (PTSPGTPGVAAATQAANGGPATPAPPPLGAAPTGDPKPKKNKKPKNPTPPRPAGDNA) are disordered. N87 and N141 each carry an N-linked (GlcNAc...) asparagine; by host glycan. 5 disulfide bridges follow: C116-C573, C133-C529, C207-C271, C364-C412, and C596-C633. 2 involved in fusion and/or binding to host membrane regions span residues 173-179 (VWFGHRY) and 258-265 (RVEAFHRY). N398 and N430 each carry an N-linked (GlcNAc...) asparagine; by host glycan. Residues 470 to 492 (REQSRKPPNPTPPPPGASANASV) are disordered. The span at 476-485 (PPNPTPPPPG) shows a compositional bias: pro residues. A glycan (N-linked (GlcNAc...) asparagine; by host) is linked at N489. N674 carries N-linked (GlcNAc...) asparagine; by host glycosylation. A hydrophobic membrane proximal region region spans residues 719-772 (IDTVIHADANAAMFAGLGAFFEGMGDLGRAVGKVVMGIVGGVVSAVSGVSSFMS). A helical transmembrane segment spans residues 775–795 (FGALAVGLLVLAGLAAAFFAF). At 796 to 904 (RYVMRLQSNP…KDGDADEDDL (109 aa)) the chain is on the intravirion side. A Golgi targeting motif is present at residues 849–852 (YMAL). The interval 883-904 (KRRNTNYTQVPNKDGDADEDDL) is disordered. T887 is modified (phosphothreonine; by host). Positions 889–892 (YTQV) match the Internalization motif motif.

The protein belongs to the herpesviridae glycoprotein B family. As to quaternary structure, homotrimer; disulfide-linked. Interacts with host receptor MYH9/NMMHC-IIA. Interacts with host receptor MYH10/NMMHC-IIB. Binds to heparan sulfate proteoglycans. Interacts with gH/gL heterodimer. Interacts with the host coreceptor PILRA. In terms of processing, the cytoplasmic tail is phosphorylated by the viral kinase US3. Phosphorylation may be linked to a down-regulation of gB expression on cell surface. Post-translationally, ubiquitinated.

It localises to the virion membrane. The protein localises to the host cell membrane. Its subcellular location is the host endosome membrane. The protein resides in the host Golgi apparatus membrane. Envelope glycoprotein that forms spikes at the surface of virion envelope and binds to the host cell entry receptors MYH9/NMMHC-IIA and MYH10/NMMHC-IIB, promoting the virus entry into host cells. Essential for the initial attachment to heparan sulfate moieties of the host cell surface proteoglycans. Involved in fusion of viral and cellular membranes leading to virus entry into the host cell: following initial binding to its host cell entry receptors, membrane fusion is mediated by the fusion machinery composed at least of gB and the heterodimer gH/gL. May be involved in the fusion between the virion envelope and the outer nuclear membrane during virion egress. Also plays a role, together with gK, in virus-induced cell-to-cell fusion (syncytia formation). The sequence is that of Envelope glycoprotein B from Human herpesvirus 1 (strain KOS) (HHV-1).